Consider the following 245-residue polypeptide: Inner membrane protein YgaZ (245 aa).

Over 1–24 (MESPTPQPAPGSATFMEGCKDSLP) the chain is Cytoplasmic. Residues 25-45 (IVISYIPVAFAFGLNATRLGF) traverse the membrane as a helical segment. At 46–63 (SPLESVFFSCIIYAGASQ) the chain is on the periplasmic side. The chain crosses the membrane as a helical span at residues 64 to 84 (FVITAMLAAGSSLWIAALTVM). The Cytoplasmic segment spans residues 85–109 (AMDVRHVLYGPSLRSRIIQRLQKSK). A helical transmembrane segment spans residues 110–130 (TALWAFGLTDEVFAAATAKLV). The Periplasmic portion of the chain corresponds to 131–140 (RNNRRWSENW). The helical transmembrane segment at 141–161 (MIGIAFSSWSSWVFGTVIGAF) threads the bilayer. Residues 162-172 (SGSGLLQGYPA) are Cytoplasmic-facing. Residues 173–193 (VEAALGFMLPALFMSFLLASF) traverse the membrane as a helical segment. The Periplasmic portion of the chain corresponds to 194-205 (QRKQSLCVTAAL). A helical membrane pass occupies residues 206–226 (VGALAGVTLFSIPVAILAGIV). Residues 227 to 245 (CGCLTALIQAFWQGAPDEL) are Cytoplasmic-facing.

Belongs to the AzlC family.

The protein resides in the cell inner membrane. This is Inner membrane protein YgaZ (ygaZ) from Escherichia coli (strain K12).